The chain runs to 121 residues: Basic phospholipase A2 F17 (121 aa).

7 disulfide bridges follow: Cys-25/Cys-114, Cys-27/Cys-43, Cys-42/Cys-94, Cys-48/Cys-121, Cys-49/Cys-87, Cys-56/Cys-80, and Cys-74/Cys-85. Ca(2+)-binding residues include Tyr-26, Gly-28, and Gly-30. The active site involves His-46. Residue Asp-47 coordinates Ca(2+). The active site involves Asp-88.

Belongs to the phospholipase A2 family. Group II subfamily. D49 sub-subfamily. In terms of assembly, when this protein is associated with crotapotin (F5 or F7), it forms the crotoxin protein. It depends on Ca(2+) as a cofactor. Expressed by the venom gland.

It is found in the secreted. The catalysed reaction is a 1,2-diacyl-sn-glycero-3-phosphocholine + H2O = a 1-acyl-sn-glycero-3-phosphocholine + a fatty acid + H(+). Activated by heparin. Inhibited by its chaperone crotapotin. Functionally, snake venom phospholipase A2 (PLA2) that has anticoagulant activity and inhibits bactericial growth of the Gram-negative bacteria Xanthomonas axonopodis pv. passiflorae (in monomeric form). PLA2 catalyzes the calcium-dependent hydrolysis of the 2-acyl groups in 3-sn-phosphoglycerides. The protein is Basic phospholipase A2 F17 of Crotalus durissus terrificus (South American rattlesnake).